The chain runs to 225 residues: Large ribosomal subunit protein uL1 (225 aa).

This sequence belongs to the universal ribosomal protein uL1 family. In terms of assembly, part of the 50S ribosomal subunit.

Functionally, binds directly to 23S rRNA. Probably involved in E site tRNA release. Its function is as follows. Protein L1 is also a translational repressor protein, it controls the translation of its operon by binding to its mRNA. This Thermofilum pendens (strain DSM 2475 / Hrk 5) protein is Large ribosomal subunit protein uL1.